The primary structure comprises 210 residues: FMN-dependent NADH:quinone oxidoreductase (210 aa).

FMN contacts are provided by residues serine 10 and 16–18; that span reads SRS.

The protein belongs to the azoreductase type 1 family. In terms of assembly, homodimer. FMN is required as a cofactor.

It carries out the reaction 2 a quinone + NADH + H(+) = 2 a 1,4-benzosemiquinone + NAD(+). The catalysed reaction is N,N-dimethyl-1,4-phenylenediamine + anthranilate + 2 NAD(+) = 2-(4-dimethylaminophenyl)diazenylbenzoate + 2 NADH + 2 H(+). In terms of biological role, quinone reductase that provides resistance to thiol-specific stress caused by electrophilic quinones. Its function is as follows. Also exhibits azoreductase activity. Catalyzes the reductive cleavage of the azo bond in aromatic azo compounds to the corresponding amines. This Kineococcus radiotolerans (strain ATCC BAA-149 / DSM 14245 / SRS30216) protein is FMN-dependent NADH:quinone oxidoreductase.